A 419-amino-acid chain; its full sequence is Tyrosine--tRNA ligase (419 aa).

Y34 contributes to the L-tyrosine binding site. The 'HIGH' region signature appears at 39-48 (PTADSLHLGH). The L-tyrosine site is built by Y169 and Q173. The 'KMSKS' region signature appears at 229–233 (KFGKS). K232 provides a ligand contact to ATP. In terms of domain architecture, S4 RNA-binding spans 352–419 (LNIIDLLVTS…KKKYFVLNFK (68 aa)).

This sequence belongs to the class-I aminoacyl-tRNA synthetase family. TyrS type 1 subfamily. As to quaternary structure, homodimer.

The protein resides in the cytoplasm. The catalysed reaction is tRNA(Tyr) + L-tyrosine + ATP = L-tyrosyl-tRNA(Tyr) + AMP + diphosphate + H(+). In terms of biological role, catalyzes the attachment of tyrosine to tRNA(Tyr) in a two-step reaction: tyrosine is first activated by ATP to form Tyr-AMP and then transferred to the acceptor end of tRNA(Tyr). This is Tyrosine--tRNA ligase from Streptococcus agalactiae serotype Ia (strain ATCC 27591 / A909 / CDC SS700).